Here is a 240-residue protein sequence, read N- to C-terminus: 1-(5-phosphoribosyl)-5-[(5-phosphoribosylamino)methylideneamino] imidazole-4-carboxamide isomerase (240 aa).

The Proton acceptor role is filled by Asp-10. The active-site Proton donor is the Asp-132.

This sequence belongs to the HisA/HisF family.

The protein localises to the cytoplasm. It catalyses the reaction 1-(5-phospho-beta-D-ribosyl)-5-[(5-phospho-beta-D-ribosylamino)methylideneamino]imidazole-4-carboxamide = 5-[(5-phospho-1-deoxy-D-ribulos-1-ylimino)methylamino]-1-(5-phospho-beta-D-ribosyl)imidazole-4-carboxamide. Its pathway is amino-acid biosynthesis; L-histidine biosynthesis; L-histidine from 5-phospho-alpha-D-ribose 1-diphosphate: step 4/9. The protein is 1-(5-phosphoribosyl)-5-[(5-phosphoribosylamino)methylideneamino] imidazole-4-carboxamide isomerase of Methanocella arvoryzae (strain DSM 22066 / NBRC 105507 / MRE50).